Consider the following 255-residue polypeptide: Imidazole glycerol phosphate synthase subunit HisF (255 aa).

Catalysis depends on residues aspartate 11 and aspartate 130.

Belongs to the HisA/HisF family. In terms of assembly, heterodimer of HisH and HisF.

Its subcellular location is the cytoplasm. It catalyses the reaction 5-[(5-phospho-1-deoxy-D-ribulos-1-ylimino)methylamino]-1-(5-phospho-beta-D-ribosyl)imidazole-4-carboxamide + L-glutamine = D-erythro-1-(imidazol-4-yl)glycerol 3-phosphate + 5-amino-1-(5-phospho-beta-D-ribosyl)imidazole-4-carboxamide + L-glutamate + H(+). Its pathway is amino-acid biosynthesis; L-histidine biosynthesis; L-histidine from 5-phospho-alpha-D-ribose 1-diphosphate: step 5/9. IGPS catalyzes the conversion of PRFAR and glutamine to IGP, AICAR and glutamate. The HisF subunit catalyzes the cyclization activity that produces IGP and AICAR from PRFAR using the ammonia provided by the HisH subunit. The chain is Imidazole glycerol phosphate synthase subunit HisF from Rhodopseudomonas palustris (strain BisB5).